Reading from the N-terminus, the 550-residue chain is 2-succinyl-5-enolpyruvyl-6-hydroxy-3-cyclohexene-1-carboxylate synthase (550 aa).

This sequence belongs to the TPP enzyme family. MenD subfamily. Homodimer. Mg(2+) is required as a cofactor. The cofactor is Mn(2+). Requires thiamine diphosphate as cofactor.

It carries out the reaction isochorismate + 2-oxoglutarate + H(+) = 5-enolpyruvoyl-6-hydroxy-2-succinyl-cyclohex-3-ene-1-carboxylate + CO2. It participates in quinol/quinone metabolism; 1,4-dihydroxy-2-naphthoate biosynthesis; 1,4-dihydroxy-2-naphthoate from chorismate: step 2/7. Its pathway is quinol/quinone metabolism; menaquinone biosynthesis. Functionally, catalyzes the thiamine diphosphate-dependent decarboxylation of 2-oxoglutarate and the subsequent addition of the resulting succinic semialdehyde-thiamine pyrophosphate anion to isochorismate to yield 2-succinyl-5-enolpyruvyl-6-hydroxy-3-cyclohexene-1-carboxylate (SEPHCHC). This chain is 2-succinyl-5-enolpyruvyl-6-hydroxy-3-cyclohexene-1-carboxylate synthase, found in Flavobacterium psychrophilum (strain ATCC 49511 / DSM 21280 / CIP 103535 / JIP02/86).